We begin with the raw amino-acid sequence, 25 residues long: Defensin D3 (25 aa).

The protein belongs to the DEFL family. Group IV subfamily. In terms of tissue distribution, distributed in the epidermal cell layer of leaves and in the subepidermal layer region of stems. Not in roots.

Its subcellular location is the secreted. It localises to the cell wall. In terms of biological role, antimicrobial peptide. Active against Fusarium spp., Gram-positive and Gram-negative bacterial pathogens. In Spinacia oleracea (Spinach), this protein is Defensin D3.